The following is a 252-amino-acid chain: 2-succinyl-6-hydroxy-2,4-cyclohexadiene-1-carboxylate synthase (252 aa).

This sequence belongs to the AB hydrolase superfamily. MenH family. In terms of assembly, monomer.

The catalysed reaction is 5-enolpyruvoyl-6-hydroxy-2-succinyl-cyclohex-3-ene-1-carboxylate = (1R,6R)-6-hydroxy-2-succinyl-cyclohexa-2,4-diene-1-carboxylate + pyruvate. It participates in quinol/quinone metabolism; 1,4-dihydroxy-2-naphthoate biosynthesis; 1,4-dihydroxy-2-naphthoate from chorismate: step 3/7. The protein operates within quinol/quinone metabolism; menaquinone biosynthesis. Functionally, catalyzes a proton abstraction reaction that results in 2,5-elimination of pyruvate from 2-succinyl-5-enolpyruvyl-6-hydroxy-3-cyclohexene-1-carboxylate (SEPHCHC) and the formation of 2-succinyl-6-hydroxy-2,4-cyclohexadiene-1-carboxylate (SHCHC). The protein is 2-succinyl-6-hydroxy-2,4-cyclohexadiene-1-carboxylate synthase of Escherichia coli O9:H4 (strain HS).